Consider the following 251-residue polypeptide: Hydroxyacylglutathione hydrolase (251 aa).

His53, His55, Asp57, His58, His110, Asp127, and His165 together coordinate Zn(2+).

The protein belongs to the metallo-beta-lactamase superfamily. Glyoxalase II family. Monomer. The cofactor is Zn(2+).

It carries out the reaction an S-(2-hydroxyacyl)glutathione + H2O = a 2-hydroxy carboxylate + glutathione + H(+). It functions in the pathway secondary metabolite metabolism; methylglyoxal degradation; (R)-lactate from methylglyoxal: step 2/2. Functionally, thiolesterase that catalyzes the hydrolysis of S-D-lactoyl-glutathione to form glutathione and D-lactic acid. In Escherichia fergusonii (strain ATCC 35469 / DSM 13698 / CCUG 18766 / IAM 14443 / JCM 21226 / LMG 7866 / NBRC 102419 / NCTC 12128 / CDC 0568-73), this protein is Hydroxyacylglutathione hydrolase.